Reading from the N-terminus, the 234-residue chain is Urease accessory protein UreF (234 aa).

Belongs to the UreF family. In terms of assembly, ureD, UreF and UreG form a complex that acts as a GTP-hydrolysis-dependent molecular chaperone, activating the urease apoprotein by helping to assemble the nickel containing metallocenter of UreC. The UreE protein probably delivers the nickel.

The protein localises to the cytoplasm. Its function is as follows. Required for maturation of urease via the functional incorporation of the urease nickel metallocenter. This chain is Urease accessory protein UreF, found in Azoarcus sp. (strain BH72).